Here is a 285-residue protein sequence, read N- to C-terminus: Bifunctional protein FolD (285 aa).

NADP(+) is bound by residues 165 to 167 (GRS) and Ser190.

It belongs to the tetrahydrofolate dehydrogenase/cyclohydrolase family. In terms of assembly, homodimer.

It carries out the reaction (6R)-5,10-methylene-5,6,7,8-tetrahydrofolate + NADP(+) = (6R)-5,10-methenyltetrahydrofolate + NADPH. The catalysed reaction is (6R)-5,10-methenyltetrahydrofolate + H2O = (6R)-10-formyltetrahydrofolate + H(+). The protein operates within one-carbon metabolism; tetrahydrofolate interconversion. In terms of biological role, catalyzes the oxidation of 5,10-methylenetetrahydrofolate to 5,10-methenyltetrahydrofolate and then the hydrolysis of 5,10-methenyltetrahydrofolate to 10-formyltetrahydrofolate. The protein is Bifunctional protein FolD of Staphylococcus saprophyticus subsp. saprophyticus (strain ATCC 15305 / DSM 20229 / NCIMB 8711 / NCTC 7292 / S-41).